A 463-amino-acid chain; its full sequence is Glycine--tRNA ligase (463 aa).

Positions 100 and 175 each coordinate substrate. Residues 207–209 (RNE), 217–222 (FRTREF), 291–292 (EL), and 335–338 (GADR) contribute to the ATP site. 222–226 (FEQME) is a substrate binding site. 331 to 335 (EPSLG) contacts substrate.

This sequence belongs to the class-II aminoacyl-tRNA synthetase family. In terms of assembly, homodimer.

It is found in the cytoplasm. The catalysed reaction is tRNA(Gly) + glycine + ATP = glycyl-tRNA(Gly) + AMP + diphosphate. In terms of biological role, catalyzes the attachment of glycine to tRNA(Gly). This chain is Glycine--tRNA ligase, found in Clostridium beijerinckii (strain ATCC 51743 / NCIMB 8052) (Clostridium acetobutylicum).